Here is a 374-residue protein sequence, read N- to C-terminus: Speckle-type POZ protein (374 aa).

An MATH domain is found at 31-161 (KFSYMWTINN…DDKLTLFCEV (131 aa)). Residues 71-191 (VNPKGLDEES…PDCRLADELG (121 aa)) are required for nuclear localization. A BTB domain is found at 173–297 (QNTMNMVKVP…MCEDALCTSL (125 aa)). Positions 297–355 (LSVENAAEILILADLHSADQLKTQAVDFINYHASDVMETSGWKSMVASHPHLVAEAYRS) are homodimerization.

Belongs to the Tdpoz family. Homodimer. Part of cullin-RING-based BCR (BTB-CUL3-RBX1) E3 ubiquitin-protein ligase complexes that contain CUL3 and SPOP, plus a target protein.

The protein localises to the nucleus. The protein resides in the nucleus speckle. Its pathway is protein modification; protein ubiquitination. Functionally, component of a cullin-RING-based BCR (BTB-CUL3-RBX1) E3 ubiquitin-protein ligase complex that mediates the ubiquitination of target proteins, leading most often to their proteasomal degradation. The protein is Speckle-type POZ protein (spop) of Danio rerio (Zebrafish).